We begin with the raw amino-acid sequence, 347 residues long: Heat-inducible transcription repressor HrcA (347 aa).

The protein belongs to the HrcA family.

In terms of biological role, negative regulator of class I heat shock genes (grpE-dnaK-dnaJ and groELS operons). Prevents heat-shock induction of these operons. The chain is Heat-inducible transcription repressor HrcA from Rhodococcus jostii (strain RHA1).